Consider the following 204-residue polypeptide: RNA-free ribonuclease P (204 aa).

The protein belongs to the HARP family.

The catalysed reaction is Endonucleolytic cleavage of RNA, removing 5'-extranucleotides from tRNA precursor.. Its function is as follows. RNA-free RNase P that catalyzes the removal of the 5'-leader sequence from pre-tRNA to produce the mature 5'-terminus. The polypeptide is RNA-free ribonuclease P (Ignicoccus hospitalis (strain KIN4/I / DSM 18386 / JCM 14125)).